Consider the following 166-residue polypeptide: Macrocypin-5a (166 aa).

The tract at residues 20–39 (NIPGGMYASSKDGKDEPVTA) is disordered.

The protein belongs to the protease inhibitor I85 family.

Inhibits papain and cysteine cathepsin endopeptidases, and also inhibits cathepsins B and H, which exhibit both exopeptidase and endopeptidase activities. This Macrolepiota procera (Parasol mushroom) protein is Macrocypin-5a.